A 390-amino-acid polypeptide reads, in one-letter code: Elongation factor Tu 2 (390 aa).

One can recognise a tr-type G domain in the interval 10 to 201 (KPHVNVGTIG…LDDYVEVPPR (192 aa)). The G1 stretch occupies residues 19 to 26 (GHVDHGKT). 19–26 (GHVDHGKT) contacts GTP. Threonine 26 contributes to the Mg(2+) binding site. A G2 region spans residues 55 to 59 (GITIA). The segment at 76-79 (DCPG) is G3. GTP is bound by residues 76–80 (DCPGH) and 131–134 (NKAD). Residues 131–134 (NKAD) are G4. The interval 168-170 (SAL) is G5.

The protein belongs to the TRAFAC class translation factor GTPase superfamily. Classic translation factor GTPase family. EF-Tu/EF-1A subfamily. As to quaternary structure, monomer.

It is found in the cytoplasm. It catalyses the reaction GTP + H2O = GDP + phosphate + H(+). Functionally, GTP hydrolase that promotes the GTP-dependent binding of aminoacyl-tRNA to the A-site of ribosomes during protein biosynthesis. The protein is Elongation factor Tu 2 of Wolbachia sp. subsp. Brugia malayi (strain TRS).